We begin with the raw amino-acid sequence, 446 residues long: Exodeoxyribonuclease 7 large subunit (446 aa).

This sequence belongs to the XseA family. As to quaternary structure, heterooligomer composed of large and small subunits.

It localises to the cytoplasm. It catalyses the reaction Exonucleolytic cleavage in either 5'- to 3'- or 3'- to 5'-direction to yield nucleoside 5'-phosphates.. Its function is as follows. Bidirectionally degrades single-stranded DNA into large acid-insoluble oligonucleotides, which are then degraded further into small acid-soluble oligonucleotides. This is Exodeoxyribonuclease 7 large subunit from Vibrio cholerae serotype O1 (strain ATCC 39315 / El Tor Inaba N16961).